The sequence spans 207 residues: MMRGGPGTPSALQMLIEALRVLPGVGPKSAQRMAYHLLQHDREGASRLAEALAEAAESIHHCSRCNTFTEQDVCETCLDPRRDASVLCVVETPADQMMIEQTLTYRGQYFVLMGRLSPLDNIGPKEIHLERLLARATDPALGGPCAEVILATNFTSEGEATAHYIGEMLKARGIKVSRLARGVPVGGELEYVDAGTIARAVLDRRQL.

The C4-type zinc finger occupies 62–77 (CSRCNTFTEQDVCETC). One can recognise a Toprim domain in the interval 85 to 184 (SVLCVVETPA…KVSRLARGVP (100 aa)).

It belongs to the RecR family.

Functionally, may play a role in DNA repair. It seems to be involved in an RecBC-independent recombinational process of DNA repair. It may act with RecF and RecO. This is Recombination protein RecR from Ralstonia nicotianae (strain ATCC BAA-1114 / GMI1000) (Ralstonia solanacearum).